The sequence spans 280 residues: Large ribosomal subunit protein uL2 (280 aa).

Disordered regions lie at residues 27–59 (STPE…GGHK) and 225–280 (VMNP…KHSR). Composition is skewed to basic residues over residues 37-59 (LHGR…GGHK) and 268-280 (IVRR…KHSR).

This sequence belongs to the universal ribosomal protein uL2 family. As to quaternary structure, part of the 50S ribosomal subunit. Forms a bridge to the 30S subunit in the 70S ribosome.

Its function is as follows. One of the primary rRNA binding proteins. Required for association of the 30S and 50S subunits to form the 70S ribosome, for tRNA binding and peptide bond formation. It has been suggested to have peptidyltransferase activity; this is somewhat controversial. Makes several contacts with the 16S rRNA in the 70S ribosome. The polypeptide is Large ribosomal subunit protein uL2 (Mycobacterium bovis (strain ATCC BAA-935 / AF2122/97)).